Here is a 337-residue protein sequence, read N- to C-terminus: Anthranilate phosphoribosyltransferase (337 aa).

Residues Gly81, 84-85 (GD), Ser89, 91-94 (NVST), 109-117 (KHGNRALSS), and Ala121 contribute to the 5-phospho-alpha-D-ribose 1-diphosphate site. Residue Gly81 participates in anthranilate binding. Ser93 contributes to the Mg(2+) binding site. Asn112 is an anthranilate binding site. Arg167 is an anthranilate binding site. Mg(2+) is bound by residues Asp226 and Glu227.

It belongs to the anthranilate phosphoribosyltransferase family. Homodimer. Requires Mg(2+) as cofactor.

It carries out the reaction N-(5-phospho-beta-D-ribosyl)anthranilate + diphosphate = 5-phospho-alpha-D-ribose 1-diphosphate + anthranilate. The protein operates within amino-acid biosynthesis; L-tryptophan biosynthesis; L-tryptophan from chorismate: step 2/5. Its function is as follows. Catalyzes the transfer of the phosphoribosyl group of 5-phosphorylribose-1-pyrophosphate (PRPP) to anthranilate to yield N-(5'-phosphoribosyl)-anthranilate (PRA). This is Anthranilate phosphoribosyltransferase from Bradyrhizobium sp. (strain ORS 278).